The sequence spans 297 residues: tRNA pseudouridine synthase B (297 aa).

Asp-44 (nucleophile) is an active-site residue.

This sequence belongs to the pseudouridine synthase TruB family. Type 1 subfamily.

It catalyses the reaction uridine(55) in tRNA = pseudouridine(55) in tRNA. Functionally, responsible for synthesis of pseudouridine from uracil-55 in the psi GC loop of transfer RNAs. The chain is tRNA pseudouridine synthase B from Mycobacterium sp. (strain JLS).